The sequence spans 422 residues: Phospho-N-acetylmuramoyl-pentapeptide-transferase (422 aa).

9 helical membrane-spanning segments follow: residues 28–48 (LMAI…FINL), 71–91 (VGVP…PCLL), 95–115 (LHNI…SLGF), 136–156 (IIGQ…SPDV), 211–231 (AGWI…SNGA), 246–266 (AIIG…EFAG), 279–299 (LVIF…YNAY), 313–333 (IGGI…IPIL), and 399–419 (KITV…IITL).

Belongs to the glycosyltransferase 4 family. MraY subfamily. The cofactor is Mg(2+).

It is found in the cell inner membrane. It catalyses the reaction UDP-N-acetyl-alpha-D-muramoyl-L-alanyl-gamma-D-glutamyl-meso-2,6-diaminopimeloyl-D-alanyl-D-alanine + di-trans,octa-cis-undecaprenyl phosphate = di-trans,octa-cis-undecaprenyl diphospho-N-acetyl-alpha-D-muramoyl-L-alanyl-D-glutamyl-meso-2,6-diaminopimeloyl-D-alanyl-D-alanine + UMP. Its pathway is cell wall biogenesis; peptidoglycan biosynthesis. Functionally, catalyzes the initial step of the lipid cycle reactions in the biosynthesis of the cell wall peptidoglycan: transfers peptidoglycan precursor phospho-MurNAc-pentapeptide from UDP-MurNAc-pentapeptide onto the lipid carrier undecaprenyl phosphate, yielding undecaprenyl-pyrophosphoryl-MurNAc-pentapeptide, known as lipid I. The polypeptide is Phospho-N-acetylmuramoyl-pentapeptide-transferase (Bacteroides fragilis (strain ATCC 25285 / DSM 2151 / CCUG 4856 / JCM 11019 / LMG 10263 / NCTC 9343 / Onslow / VPI 2553 / EN-2)).